The following is an 871-amino-acid chain: Alanine--tRNA ligase (871 aa).

Zn(2+) is bound by residues H561, H565, C665, and H669.

The protein belongs to the class-II aminoacyl-tRNA synthetase family. Zn(2+) is required as a cofactor.

The protein resides in the cytoplasm. It catalyses the reaction tRNA(Ala) + L-alanine + ATP = L-alanyl-tRNA(Ala) + AMP + diphosphate. In terms of biological role, catalyzes the attachment of alanine to tRNA(Ala) in a two-step reaction: alanine is first activated by ATP to form Ala-AMP and then transferred to the acceptor end of tRNA(Ala). Also edits incorrectly charged Ser-tRNA(Ala) and Gly-tRNA(Ala) via its editing domain. In Dehalococcoides mccartyi (strain ATCC BAA-2100 / JCM 16839 / KCTC 5957 / BAV1), this protein is Alanine--tRNA ligase.